A 290-amino-acid chain; its full sequence is Arylamine N-acetyltransferase 2 (290 aa).

The Acyl-thioester intermediate role is filled by Cys68. Ser103 and Gly104 together coordinate CoA. 106–107 (IH) contributes to the substrate binding site. Active-site residues include His107 and Asp122. CoA is bound at residue Tyr208.

It belongs to the arylamine N-acetyltransferase family.

The protein localises to the cytoplasm. The enzyme catalyses an arylamine + acetyl-CoA = an N-acetylarylamine + CoA. It catalyses the reaction an N-hydroxyarylamine + acetyl-CoA = an N-acetoxyarylamine + CoA. Catalyzes the N- or O-acetylation of various arylamine and heterocyclic amine substrates, and participates in the detoxification of a plethora of hydrazine and arylamine drugs. This is Arylamine N-acetyltransferase 2 (NAT2) from Mesocricetus auratus (Golden hamster).